The following is a 325-amino-acid chain: NADH-quinone oxidoreductase subunit H (325 aa).

The next 8 membrane-spanning stretches (helical) occupy residues 11 to 31 (ILIS…CGAF), 81 to 101 (VIFT…FAIV), 114 to 134 (IGIL…LFAG), 149 to 169 (ASAQ…GVVA), 186 to 206 (MWNV…GVAV), 237 to 257 (FFVG…TLFF), 265 to 285 (LPPF…FILI), and 304 to 324 (VCLP…LYNA).

It belongs to the complex I subunit 1 family. As to quaternary structure, NDH-1 is composed of 13 different subunits. Subunits NuoA, H, J, K, L, M, N constitute the membrane sector of the complex.

The protein resides in the cell inner membrane. It catalyses the reaction a quinone + NADH + 5 H(+)(in) = a quinol + NAD(+) + 4 H(+)(out). Its function is as follows. NDH-1 shuttles electrons from NADH, via FMN and iron-sulfur (Fe-S) centers, to quinones in the respiratory chain. The immediate electron acceptor for the enzyme in this species is believed to be ubiquinone. Couples the redox reaction to proton translocation (for every two electrons transferred, four hydrogen ions are translocated across the cytoplasmic membrane), and thus conserves the redox energy in a proton gradient. This subunit may bind ubiquinone. The sequence is that of NADH-quinone oxidoreductase subunit H from Serratia proteamaculans (strain 568).